A 783-amino-acid polypeptide reads, in one-letter code: B-cell scaffold protein with ankyrin repeats (783 aa).

Positions 1 to 154 are interaction with ITPR2; the sequence is MLPVASGTRG…GYISVIRQIL (154 aa). The 129-residue stretch at 25–153 folds into the TIR domain; it reads NAKDILLLYE…DGYISVIRQI (129 aa). A DBB domain is found at 199-326; it reads VLPGEIPCEK…EIPYYEFKHL (128 aa). ANK repeat units follow at residues 341–370 and 377–407; these read ELPT…ATRA and DGSD…NTGR. 4 disordered regions span residues 422 to 521, 538 to 586, 604 to 624, and 641 to 670; these read FSTY…AASQ, MERS…EDNE, SFII…PPKE, and RQSD…STRD. Over residues 444 to 479 the composition is skewed to basic and acidic residues; sequence RNTDRSEEPERSVEMKEEEAGAEARRSLSEGERESS. A compositionally biased stretch (pro residues) spans 505–515; it reads HCRPPLLPPRP. Residues 549–565 show a composition bias toward basic and acidic residues; sequence ARPETREESSREEKKEE. The segment covering 566–586 has biased composition (acidic residues); sequence AQEEEEEEENPYAFAETEDNE. A compositionally biased stretch (pro residues) spans 610–620; that stretch reads PPAPTPRPTHI. Positions 641–660 are enriched in basic and acidic residues; it reads RQSDGDKFYSLPKKPDKTRM. Tyr-649 is modified (phosphotyrosine).

As to quaternary structure, interacts with LYN, ITPR1 and ITPR2. Phosphorylated on tyrosines upon BCR activation. In terms of tissue distribution, specifically expressed in spleen. Highly expressed in immature B-cells and recirculating B-cells, and at low levels in pro-B and pre-B cells.

Its function is as follows. Involved in B-cell receptor (BCR)-induced Ca(2+) mobilization from intracellular stores. Promotes Lyn-mediated phosphorylation of IP3 receptors 1 and 2. This chain is B-cell scaffold protein with ankyrin repeats (Bank1), found in Mus musculus (Mouse).